Here is a 704-residue protein sequence, read N- to C-terminus: Arylphorin (704 aa).

A signal peptide spans 1-16 (MKIVLVLAGLIALVQS). N-linked (GlcNAc...) asparagine glycosylation is found at asparagine 73, asparagine 212, and asparagine 360.

It belongs to the hemocyanin family. In terms of assembly, homohexamer of two stacked trimers; disulfide-linked. Glycosylation at Asn-360 is required for proper folding.

It localises to the secreted. The protein resides in the extracellular space. Its function is as follows. Arylphorin is a larval storage protein (LSP) which may serve as a storage protein used primarily as a source of aromatic amino acids for protein synthesis during metamorphosis. It is a constituent of the sclerotizing system of the cuticle, and serves as a carrier for ecdysteroid hormone. The chain is Arylphorin from Antheraea pernyi (Chinese oak silk moth).